A 236-amino-acid chain; its full sequence is Segregation and condensation protein A (236 aa).

The protein belongs to the ScpA family. In terms of assembly, component of a cohesin-like complex composed of ScpA, ScpB and the Smc homodimer, in which ScpA and ScpB bind to the head domain of Smc. The presence of the three proteins is required for the association of the complex with DNA.

The protein resides in the cytoplasm. Its function is as follows. Participates in chromosomal partition during cell division. May act via the formation of a condensin-like complex containing Smc and ScpB that pull DNA away from mid-cell into both cell halves. The sequence is that of Segregation and condensation protein A from Streptococcus sanguinis (strain SK36).